Reading from the N-terminus, the 399-residue chain is Probable peptidoglycan glycosyltransferase FtsW (399 aa).

9 helical membrane passes run 33 to 53 (LVWLTLGLFSVGLIMVISTSI), 71 to 91 (IFYFFLIFLLSFIFLRTPIIF), 98 to 118 (IILIISIVLLVLVLLIGHSIH), 160 to 180 (FWGFFKPMSVIITQSMLLLAE), 182 to 202 (DLGTVVVLFFTTISVLFLSGA), 204 to 224 (IGQFFIIITVSILTIILLILL), 287 to 307 (IIGEELGYIGSFLILLIIFTI), 324 to 344 (IFSGFLACSIGIWLSFQTSIN), and 359 to 379 (LPFISYGGSSLIINSIAIFFL).

The protein belongs to the SEDS family. FtsW subfamily.

It localises to the cell inner membrane. The enzyme catalyses [GlcNAc-(1-&gt;4)-Mur2Ac(oyl-L-Ala-gamma-D-Glu-L-Lys-D-Ala-D-Ala)](n)-di-trans,octa-cis-undecaprenyl diphosphate + beta-D-GlcNAc-(1-&gt;4)-Mur2Ac(oyl-L-Ala-gamma-D-Glu-L-Lys-D-Ala-D-Ala)-di-trans,octa-cis-undecaprenyl diphosphate = [GlcNAc-(1-&gt;4)-Mur2Ac(oyl-L-Ala-gamma-D-Glu-L-Lys-D-Ala-D-Ala)](n+1)-di-trans,octa-cis-undecaprenyl diphosphate + di-trans,octa-cis-undecaprenyl diphosphate + H(+). It functions in the pathway cell wall biogenesis; peptidoglycan biosynthesis. In terms of biological role, peptidoglycan polymerase that is essential for cell division. The sequence is that of Probable peptidoglycan glycosyltransferase FtsW from Buchnera aphidicola subsp. Acyrthosiphon pisum (strain APS) (Acyrthosiphon pisum symbiotic bacterium).